Reading from the N-terminus, the 840-residue chain is Probable alpha-glucuronidase A (840 aa).

The N-terminal stretch at 1–19 (MRSVITTLTLVASVGLAVA) is a signal peptide. N-linked (GlcNAc...) asparagine glycosylation is found at N222, N310, N465, N527, N576, N682, and N732.

It belongs to the glycosyl hydrolase 67 family.

It localises to the secreted. It catalyses the reaction an alpha-D-glucuronoside + H2O = D-glucuronate + an alcohol. Its function is as follows. Alpha-glucuronidase involved in the hydrolysis of xylan, a major structural heterogeneous polysaccharide found in plant biomass representing the second most abundant polysaccharide in the biosphere, after cellulose. Releases 4-O-methylglucuronic acid from xylan. The protein is Probable alpha-glucuronidase A (aguA) of Aspergillus clavatus (strain ATCC 1007 / CBS 513.65 / DSM 816 / NCTC 3887 / NRRL 1 / QM 1276 / 107).